The primary structure comprises 339 residues: Anthranilate phosphoribosyltransferase (339 aa).

5-phospho-alpha-D-ribose 1-diphosphate-binding positions include glycine 82, 85–86 (GD), threonine 90, 92–95 (NIST), and 110–118 (KHGNRAVSS). Residue glycine 82 participates in anthranilate binding. Serine 94 is a binding site for Mg(2+). 2 residues coordinate anthranilate: asparagine 113 and arginine 168. Mg(2+) contacts are provided by aspartate 227 and glutamate 228.

Belongs to the anthranilate phosphoribosyltransferase family. Homodimer. The cofactor is Mg(2+).

It carries out the reaction N-(5-phospho-beta-D-ribosyl)anthranilate + diphosphate = 5-phospho-alpha-D-ribose 1-diphosphate + anthranilate. It participates in amino-acid biosynthesis; L-tryptophan biosynthesis; L-tryptophan from chorismate: step 2/5. Functionally, catalyzes the transfer of the phosphoribosyl group of 5-phosphorylribose-1-pyrophosphate (PRPP) to anthranilate to yield N-(5'-phosphoribosyl)-anthranilate (PRA). This is Anthranilate phosphoribosyltransferase from Clostridium beijerinckii (strain ATCC 51743 / NCIMB 8052) (Clostridium acetobutylicum).